The primary structure comprises 91 residues: Small ribosomal subunit protein uS19 (91 aa).

Belongs to the universal ribosomal protein uS19 family.

Protein S19 forms a complex with S13 that binds strongly to the 16S ribosomal RNA. The polypeptide is Small ribosomal subunit protein uS19 (rpsS) (Mycoplasmopsis pulmonis (strain UAB CTIP) (Mycoplasma pulmonis)).